Here is a 310-residue protein sequence, read N- to C-terminus: Olfactory receptor 8G3 (310 aa).

The Extracellular portion of the chain corresponds to 1 to 25 (MDPGNHSSVTESILAGLSEQPELQL). Asparagine 5 carries an N-linked (GlcNAc...) asparagine glycan. Residues 26–46 (RLFLLFLGICVVTVVGNLGMI) form a helical membrane-spanning segment. The Cytoplasmic portion of the chain corresponds to 47–54 (TLIGLSSH). The chain crosses the membrane as a helical span at residues 55–75 (LHTPMYYFLSSLSFIDFCHST). Residues 76–99 (VITPKMLVNFATEKNIISYPECMA) lie on the Extracellular side of the membrane. Cysteine 97 and cysteine 189 are joined by a disulfide. A helical membrane pass occupies residues 100 to 120 (QLYLFSIFAIAECHMLAAMAY). Residues 121 to 139 (DCYVAICSPLLYNVIMSYH) are Cytoplasmic-facing. Residues 140 to 160 (HCFWLTVGVYILGILGSTIHT) form a helical membrane-spanning segment. At 161-197 (SFMLRLFLCKTNVINHYFCDLFPLLGLSCSSTYINEL) the chain is on the extracellular side. A helical transmembrane segment spans residues 198 to 217 (LVLVLSAFNILMPALTILAS). Over 218–237 (YIFIIASILRIHSTEGRSKA) the chain is Cytoplasmic. A helical transmembrane segment spans residues 238–258 (FSTCSSHILAVAVFFGSAAFM). Over 259 to 271 (YLQPSSVSSMDQR) the chain is Extracellular. A helical transmembrane segment spans residues 272-292 (KVSSVFYTTIVPMLNPLIYSL). The Cytoplasmic segment spans residues 293–310 (RNKDVKLAVKKILHQTAC).

This sequence belongs to the G-protein coupled receptor 1 family.

The protein localises to the cell membrane. Odorant receptor. The chain is Olfactory receptor 8G3 from Homo sapiens (Human).